Here is a 129-residue protein sequence, read N- to C-terminus: DNA-directed RNA polymerase subunit omega (129 aa).

The tract at residues 76–100 (EVDEPEPEAVPMIASGDSSGGEDSD) is disordered.

This sequence belongs to the RNA polymerase subunit omega family. The RNAP catalytic core consists of 2 alpha, 1 beta, 1 beta' and 1 omega subunit. When a sigma factor is associated with the core the holoenzyme is formed, which can initiate transcription.

The enzyme catalyses RNA(n) + a ribonucleoside 5'-triphosphate = RNA(n+1) + diphosphate. Its function is as follows. Promotes RNA polymerase assembly. Latches the N- and C-terminal regions of the beta' subunit thereby facilitating its interaction with the beta and alpha subunits. The sequence is that of DNA-directed RNA polymerase subunit omega from Xanthobacter autotrophicus (strain ATCC BAA-1158 / Py2).